Reading from the N-terminus, the 497-residue chain is Uridine 5'-monophosphate synthase (497 aa).

The OPRTase stretch occupies residues threonine 8–asparagine 226. The tract at residues leucine 227–tyrosine 232 is domain linker. The segment at valine 233 to serine 496 is OMPdecase. UMP is bound by residues aspartate 271 and lysine 293 to histidine 295. Lysine 293 contacts orotidine 5'-phosphate. Active-site for OMPdecase activity residues include aspartate 324, lysine 326, and aspartate 329. Orotidine 5'-phosphate contacts are provided by residues lysine 326, aspartate 329, threonine 333, serine 387, glutamine 446–tryptophan 448, and glycine 466–arginine 467. UMP contacts are provided by residues aspartate 329, threonine 333, serine 387, glutamine 446–tryptophan 448, and glycine 466–arginine 467.

In the N-terminal section; belongs to the purine/pyrimidine phosphoribosyltransferase family. It in the C-terminal section; belongs to the OMP decarboxylase family. As to expression, expressed in intestine and in neurons near the nerve ring and rectum.

Its subcellular location is the cytoplasm. The enzyme catalyses orotidine 5'-phosphate + diphosphate = orotate + 5-phospho-alpha-D-ribose 1-diphosphate. It carries out the reaction orotidine 5'-phosphate + H(+) = UMP + CO2. Its pathway is pyrimidine metabolism; UMP biosynthesis via de novo pathway; UMP from orotate: step 1/2. It functions in the pathway pyrimidine metabolism; UMP biosynthesis via de novo pathway; UMP from orotate: step 2/2. Functionally, bifunctional enzyme which catalyzes the formation of UMP from orotate in the de novo pathway of pyrimidine biosynthesis. May also form UMP from uracil. Regulates the size of gut granules during embryonic development. Involved in resistance to DNA damaging agents including UV-C and X-ray radiation. This Caenorhabditis elegans protein is Uridine 5'-monophosphate synthase.